The chain runs to 366 residues: Chorismate synthase (366 aa).

NADP(+) contacts are provided by arginine 48 and arginine 54. FMN is bound by residues 125-127, 238-239, glycine 278, 293-297, and arginine 319; these read RSS, NA, and KPTSS.

It belongs to the chorismate synthase family. Homotetramer. It depends on FMNH2 as a cofactor.

It catalyses the reaction 5-O-(1-carboxyvinyl)-3-phosphoshikimate = chorismate + phosphate. It functions in the pathway metabolic intermediate biosynthesis; chorismate biosynthesis; chorismate from D-erythrose 4-phosphate and phosphoenolpyruvate: step 7/7. In terms of biological role, catalyzes the anti-1,4-elimination of the C-3 phosphate and the C-6 proR hydrogen from 5-enolpyruvylshikimate-3-phosphate (EPSP) to yield chorismate, which is the branch point compound that serves as the starting substrate for the three terminal pathways of aromatic amino acid biosynthesis. This reaction introduces a second double bond into the aromatic ring system. This Neisseria gonorrhoeae (strain ATCC 700825 / FA 1090) protein is Chorismate synthase.